Consider the following 172-residue polypeptide: RNA pyrophosphohydrolase (172 aa).

Residues 6–149 (GFRANVGIII…KRDVYRKVMK (144 aa)) enclose the Nudix hydrolase domain. A Nudix box motif is present at residues 38-59 (GGVDEGETPEEAMFRELYEEVG).

The protein belongs to the Nudix hydrolase family. RppH subfamily. The cofactor is a divalent metal cation.

Its function is as follows. Accelerates the degradation of transcripts by removing pyrophosphate from the 5'-end of triphosphorylated RNA, leading to a more labile monophosphorylated state that can stimulate subsequent ribonuclease cleavage. The sequence is that of RNA pyrophosphohydrolase from Shewanella sediminis (strain HAW-EB3).